Here is a 91-residue protein sequence, read N- to C-terminus: Small ribosomal subunit protein uS15 (91 aa).

It belongs to the universal ribosomal protein uS15 family. As to quaternary structure, part of the 30S ribosomal subunit. Forms a bridge to the 50S subunit in the 70S ribosome, contacting the 23S rRNA.

In terms of biological role, one of the primary rRNA binding proteins, it binds directly to 16S rRNA where it helps nucleate assembly of the platform of the 30S subunit by binding and bridging several RNA helices of the 16S rRNA. Functionally, forms an intersubunit bridge (bridge B4) with the 23S rRNA of the 50S subunit in the ribosome. The polypeptide is Small ribosomal subunit protein uS15 (Synechococcus sp. (strain JA-2-3B'a(2-13)) (Cyanobacteria bacterium Yellowstone B-Prime)).